We begin with the raw amino-acid sequence, 273 residues long: Orotidine 5'-phosphate decarboxylase (273 aa).

The active-site Proton donor is Lys97.

It belongs to the OMP decarboxylase family. Type 2 subfamily.

It carries out the reaction orotidine 5'-phosphate + H(+) = UMP + CO2. It functions in the pathway pyrimidine metabolism; UMP biosynthesis via de novo pathway; UMP from orotate: step 2/2. In Cellvibrio japonicus (strain Ueda107) (Pseudomonas fluorescens subsp. cellulosa), this protein is Orotidine 5'-phosphate decarboxylase.